Consider the following 270-residue polypeptide: Interleukin-1 beta (270 aa).

The propeptide occupies 1–118 (MATVPEPTSE…VYDDDAFVCD (118 aa)).

It belongs to the IL-1 family. In terms of assembly, monomer. In its precursor form, weakly interacts with full-length MEFV; the mature cytokine does not interact at all. Interacts with integrins ITGAV:ITGBV and ITGA5:ITGB1; integrin-binding is required for IL1B signaling. Interacts with cargo receptor TMED10; the interaction is direct and is required for the secretion of IL1B mature form. Interacts with HSP90AB1; the interaction facilitates cargo translocation into the ERGIC. Interacts with HSP90B1; the interaction facilitates cargo translocation into the ERGIC.

Its subcellular location is the cytoplasm. It is found in the cytosol. It localises to the secreted. The protein localises to the lysosome. The protein resides in the extracellular exosome. Functionally, potent pro-inflammatory cytokine. Initially discovered as the major endogenous pyrogen, induces prostaglandin synthesis, neutrophil influx and activation, T-cell activation and cytokine production, B-cell activation and antibody production, and fibroblast proliferation and collagen production. Promotes Th17 differentiation of T-cells. Synergizes with IL12/interleukin-12 to induce IFNG synthesis from T-helper 1 (Th1) cells. Plays a role in angiogenesis by inducing VEGF production synergistically with TNF and IL6. Involved in transduction of inflammation downstream of pyroptosis: its mature form is specifically released in the extracellular milieu by passing through the gasdermin-D (GSDMD) pore. The sequence is that of Interleukin-1 beta (IL1B) from Eumetopias jubatus (Steller sea lion).